Here is a 506-residue protein sequence, read N- to C-terminus: Sodium-coupled neutral amino acid symporter 2 (506 aa).

The interval 1-23 is disordered; the sequence is MKKAEMGRFNISPDEDSSSYSSN. Over 1–76 the chain is Cytoplasmic; that stretch reads MKKAEMGRFN…HPGTTSFGMS (76 aa). The regulates protein turnover upon amino acid deprivation stretch occupies residues 1–96; the sequence is MKKAEMGRFN…SGILGLSYAM (96 aa). Phosphoserine is present on residues serine 12, serine 21, serine 22, and serine 55. A helical membrane pass occupies residues 77–96; it reads VFNLSNAIVGSGILGLSYAM. Asparagine 82 is a binding site for Na(+). Residues 97 to 102 are Extracellular-facing; that stretch reads ANTGIA. A helical membrane pass occupies residues 103 to 123; sequence LFIILLTFVSIFSLYSVHLLL. Residues 124 to 158 lie on the Cytoplasmic side of the membrane; that stretch reads KTANEGGSLLYEQLGHKAFGMVGKLTASGSITMQN. The chain crosses the membrane as a helical span at residues 159 to 177; sequence IGAMSSYLFIVKYELPLVI. Topologically, residues 178–188 are extracellular; that stretch reads QALMNIEDTNG. A helical transmembrane segment spans residues 189–209; sequence LWYLNGDYLVLLVSLVLILPL. Topologically, residues 210-217 are cytoplasmic; sequence SLLRNLGY. Residues 218–238 traverse the membrane as a helical segment; the sequence is LGYTSGLSLLCMMFFLIVVIF. At 239–292 the chain is on the extracellular side; the sequence is KKFQISCPAEIAFLVNETVNSSLTQPATFLPDMGFNRTESDSCQPRYFIFNSQT. A disulfide bridge links cysteine 245 with cysteine 281. 2 N-linked (GlcNAc...) asparagine glycosylation sites follow: asparagine 258 and asparagine 274. Residues 293 to 313 traverse the membrane as a helical segment; the sequence is VYAVPILTFSFVCHPAILPIY. The Cytoplasmic portion of the chain corresponds to 314–329; sequence EELKGRSRRRMMNVSK. A helical transmembrane segment spans residues 330–350; it reads ISFFAMFLMYLLAALFGYLTF. Over 351–371 the chain is Extracellular; that stretch reads YGHVESELLHTYSSVMETDIL. The chain crosses the membrane as a helical span at residues 372–392; it reads LLIVRLAVLVAVTLTVPVVIF. Threonine 386 is a binding site for Na(+). Residues 393–413 are Cytoplasmic-facing; the sequence is PIRSSITHLLCASKEFSWWRH. The chain crosses the membrane as a helical span at residues 414–434; that stretch reads SVITVSILVFTNLLVIFVPNI. At 435 to 436 the chain is on the extracellular side; the sequence is RD. Residues 437 to 457 form a helical membrane-spanning segment; that stretch reads IFGFIGASAAAMLIFILPSAF. Residues 458–472 are Cytoplasmic-facing; the sequence is YIKLVKKEPMKSVQK. The helical transmembrane segment at 473–495 threads the bilayer; the sequence is IGAMFFLLSGIVVMTGSMALIVL. At 496 to 506 the chain is on the extracellular side; sequence DWVHNAPGGGH.

Belongs to the amino acid/polyamine transporter 2 family. Polyubiquitination by NEDD4L regulates the degradation and the activity of SLC38A2.

It is found in the cell membrane. It catalyses the reaction L-alanine(in) + Na(+)(in) = L-alanine(out) + Na(+)(out). It carries out the reaction glycine(in) + Na(+)(in) = glycine(out) + Na(+)(out). The catalysed reaction is L-serine(in) + Na(+)(in) = L-serine(out) + Na(+)(out). The enzyme catalyses L-proline(in) + Na(+)(in) = L-proline(out) + Na(+)(out). It catalyses the reaction L-methionine(in) + Na(+)(in) = L-methionine(out) + Na(+)(out). It carries out the reaction L-histidine(in) + Na(+)(in) = L-histidine(out) + Na(+)(out). The catalysed reaction is L-asparagine(in) + Na(+)(in) = L-asparagine(out) + Na(+)(out). The enzyme catalyses L-glutamine(in) + Na(+)(in) = L-glutamine(out) + Na(+)(out). It catalyses the reaction L-threonine(in) + Na(+)(in) = L-threonine(out) + Na(+)(out). It carries out the reaction L-leucine(in) + Na(+)(in) = L-leucine(out) + Na(+)(out). The catalysed reaction is L-phenylalanine(in) + Na(+)(in) = L-phenylalanine(out) + Na(+)(out). Inhibited by N-methyl-D-glucamine. Inhibited by choline. Allosteric regulation of sodium ions binding by pH. Symporter that cotransports neutral amino acids and sodium ions from the extracellular to the intracellular side of the cell membrane. The transport is pH-sensitive, Li(+)-intolerant, electrogenic, driven by the Na(+) electrochemical gradient and cotransports of neutral amino acids and sodium ions with a stoichiometry of 1:1. May function in the transport of amino acids at the blood-brain barrier. May function in the transport of amino acids in the supply of maternal nutrients to the fetus through the placenta. Maintains a key metabolic glutamine/glutamate balance underpinning retrograde signaling by dendritic release of the neurotransmitter glutamate. Transports L-proline in differentiating osteoblasts for the efficient synthesis of proline-enriched proteins and provides proline essential for osteoblast differentiation and bone formation during bone development. This chain is Sodium-coupled neutral amino acid symporter 2, found in Bos taurus (Bovine).